We begin with the raw amino-acid sequence, 102 residues long: MFALIISSKGKTSGFFFNSSFSSSALVGIAPLTAYSALVTPVFKSFLVILPAGLKSKSFAVNTPFKSCWCVIVMCSYFFCVYHLQKQHYCGAPSLYSYLLCL.

The next 2 helical transmembrane spans lie at 21–43 (FSSS…TPVF) and 58–80 (SFAV…YFFC).

It localises to the membrane. This is an uncharacterized protein from Saccharomyces cerevisiae (strain ATCC 204508 / S288c) (Baker's yeast).